The following is a 206-amino-acid chain: Synaptosomal-associated protein 25 (206 aa).

Positions 1–20 (MAEDADMRNELEEMQRRADQ) are enriched in basic and acidic residues. The disordered stretch occupies residues 1-25 (MAEDADMRNELEEMQRRADQLADES). The interval 1 to 75 (MAEDADMRNE…QINKDMKEAE (75 aa)) is interaction with CENPF. The region spanning 19-81 (DQLADESLES…KEAEKNSTDL (63 aa)) is the t-SNARE coiled-coil homology 1 domain. Residues Cys85, Cys88, Cys90, and Cys92 are each lipidated (S-palmitoyl cysteine). The interval 111 to 120 (GVVASQPARV) is interaction with ZDHHC17. Thr138 is modified (phosphothreonine). The t-SNARE coiled-coil homology 2 domain occupies 140–202 (DARENEMDEN…DEANQRATKM (63 aa)). A phosphoserine mark is found at Ser154 and Ser187.

It belongs to the SNAP-25 family. As to quaternary structure, part of the SNARE core complex containing SNAP25, VAMP2 and STX1A; this complex binds CPLX1. Found in a complex containing SYT1, SV2B and syntaxin-1. Found in a ternary complex with STX1A and VAMP8. Interacts with HSC70 and with SYT9, forming a complex with DNAJC5. The interaction with SYT9 is inhibited in presence of calcium. Isoform 1 and isoform 2 interact with BLOC1S6. Interacts with CENPF. Interacts with EQTN. Interacts with HGS. Interacts with KCNB1 (via N-terminus); reduces the voltage-dependent potassium channel KCNB1 activity in pancreatic beta cells. Interacts with OTOF. Interacts with RIMS1. Interacts with SNAPIN. Interacts with STXBP6. Interacts with TRIM9. Interacts with ZDHHC13 (via ANK repeats). Interacts with ZDHHC17 (via ANK repeats). Associates with the BLOC-1 complex. Interacts with PLCL1 (via C2 domain). Interacts with PRRT2; this interaction may impair the formation of the SNARE complex. Interacts with alpha-synuclein/SNCA. Interacts with PRPH2. Interacts with ROM1. Interacts with STX3. Palmitoylated. Cys-85 appears to be the main site, and palmitoylation is required for membrane association.

The protein localises to the cytoplasm. It localises to the perinuclear region. It is found in the cell membrane. The protein resides in the synapse. Its subcellular location is the synaptosome. The protein localises to the photoreceptor inner segment. Its function is as follows. t-SNARE involved in the molecular regulation of neurotransmitter release. May play an important role in the synaptic function of specific neuronal systems. Associates with proteins involved in vesicle docking and membrane fusion. Regulates plasma membrane recycling through its interaction with CENPF. Modulates the gating characteristics of the delayed rectifier voltage-dependent potassium channel KCNB1 in pancreatic beta cells. The polypeptide is Synaptosomal-associated protein 25 (SNAP25) (Pongo abelii (Sumatran orangutan)).